A 119-amino-acid chain; its full sequence is Large ribosomal subunit protein bL20 (119 aa).

It belongs to the bacterial ribosomal protein bL20 family.

Functionally, binds directly to 23S ribosomal RNA and is necessary for the in vitro assembly process of the 50S ribosomal subunit. It is not involved in the protein synthesizing functions of that subunit. The chain is Large ribosomal subunit protein bL20 from Jannaschia sp. (strain CCS1).